The following is a 548-amino-acid chain: 1,3-beta-glucanosyltransferase gel4 (548 aa).

The N-terminal stretch at 1–25 is a signal peptide; it reads MKFVYAAAGASLVGSALATLPVIEA. N-linked (GlcNAc...) asparagine glycans are attached at residues Asn-51 and Asn-69. Cysteines 88 and 117 form a disulfide. (1,3-beta-D-glucosyl)n is bound by residues Tyr-106, 133–141, Asn-174, and Glu-175; that span reads SAPSESINR. Catalysis depends on Glu-175, which acts as the Proton donor. Asn-181 is a glycosylation site (N-linked (GlcNAc...) asparagine). Residues Asp-217 and Arg-222 each coordinate (1,3-beta-D-glucosyl)n. 5 disulfides stabilise this stretch: Cys-231-Cys-364, Cys-249-Cys-280, Cys-386-Cys-437, Cys-395-Cys-461, and Cys-414-Cys-419. Glu-277 serves as the catalytic Nucleophile. Residue Tyr-309 coordinates (1,3-beta-D-glucosyl)n. N-linked (GlcNAc...) asparagine glycosylation occurs at Asn-425. A lipid anchor (GPI-like-anchor amidated alanine) is attached at Ala-519. The propeptide at 520-548 is removed in mature form; that stretch reads SPMAVKVGNWQFGAYIATALFAGVGMLVL.

The protein belongs to the glycosyl hydrolase 72 family. Post-translationally, the GPI-like anchor contains a phosphoceramide lipid group.

The protein resides in the cell membrane. Its function is as follows. Splits internally a 1,3-beta-glucan molecule and transfers the newly generated reducing end (the donor) to the non-reducing end of another 1,3-beta-glucan molecule (the acceptor) forming a 1,3-beta linkage, resulting in the elongation of 1,3-beta-glucan chains in the cell wall. Involved in cell wall morphogenesis. The protein is 1,3-beta-glucanosyltransferase gel4 (gel4) of Aspergillus fumigatus (strain ATCC MYA-4609 / CBS 101355 / FGSC A1100 / Af293) (Neosartorya fumigata).